The following is a 317-amino-acid chain: Melanocyte-stimulating hormone receptor (317 aa).

The Extracellular portion of the chain corresponds to 1 to 37 (MPMQEPQRRLLGPFNSTRTGAPHLELSANQTGPWCLH). N-linked (GlcNAc...) asparagine glycans are attached at residues asparagine 15 and asparagine 29. A helical transmembrane segment spans residues 38–63 (VSIPDGLFLSLGLVSLVENVLVVISI). Over 64-72 (AKNQNLHSP) the chain is Cytoplasmic. A helical transmembrane segment spans residues 73 to 93 (MYYFICCLALSDLLVSVSIVL). Over 94–118 (ETTLILVLEAGALATRVTVVQQLDN) the chain is Extracellular. The chain crosses the membrane as a helical span at residues 119–140 (VIDVLICASMVSSLCFLGAIAV). The Cytoplasmic segment spans residues 141–163 (DRYISIFYALRYHSIVTLPRARW). Residues 164 to 183 (AIVAIWVASISSSTLFVAYY) traverse the membrane as a helical segment. Residues 184–191 (NHTAVLLC) lie on the Extracellular side of the membrane. A helical membrane pass occupies residues 192-211 (LVTFFLATLALMVVLYVHML). The Cytoplasmic portion of the chain corresponds to 212–240 (ARAHQHAQAIAQLHKRQHLVHQGFRLKGA). The helical transmembrane segment at 241 to 266 (ATLTILLGIFFLCWGPFFLYLTLIVL) threads the bilayer. The Extracellular portion of the chain corresponds to 267–279 (CPKHPTCGCFFKN). Residues 280 to 300 (LNLFLALIIFNSIVDPLIYAF) form a helical membrane-spanning segment. Residues 301–317 (RSQELRMTLKEVLLCSW) lie on the Cytoplasmic side of the membrane. Cysteine 315 carries the S-palmitoyl cysteine lipid modification.

It belongs to the G-protein coupled receptor 1 family. In terms of assembly, interacts with MGRN1, but does not undergo MGRN1-mediated ubiquitination; this interaction competes with GNAS-binding and thus inhibits agonist-induced cAMP production. Interacts with OPN3; the interaction results in a decrease in MC1R-mediated cAMP signaling and ultimately a decrease in melanin production in melanocytes.

Its subcellular location is the cell membrane. Receptor for MSH (alpha, beta and gamma) and ACTH. The activity of this receptor is mediated by G proteins which activate adenylate cyclase. Mediates melanogenesis, the production of eumelanin (black/brown) and phaeomelanin (red/yellow), via regulation of cAMP signaling in melanocytes. The polypeptide is Melanocyte-stimulating hormone receptor (MC1R) (Chaetodipus penicillatus (Desert pocket mouse)).